We begin with the raw amino-acid sequence, 419 residues long: MKIQAPKGTKDVLPEESYIWQYVESKFRQICKLYGYQEVRFPTFEYTELFQRGVGETTDIVQKEMYTFLDKGGRSITLRPEGTASVARLFIEHGFASRPMPQRLYYIISAFRYENTQGGRYREFHQFGIENFGSKSPVTDAEIISLSYNFFVSLGLDNIVVNINSIGCPVCRKDYVKNLKEYFLGYYDKLCPTCKQRLDKNPMRILDCKEDNCKLIAQDAPKPIEYLCDECKTHFEALKGYLDAAGVCYKVDPYIVRGLDYYTRTVFEIVDVVLDKELAICGGGRYDNLIEQIGGSSTPGIGFAIGVERLIMLLSQKGLIPQKPQVPQVFIATLGDLATKKAFEIASTLRFEGISTVIEELSRSLKSQMKYADKLGCDFAVIIGDDELEKGVCKVREMKTSSEEVVRIEGLAQHIKSKI.

The protein belongs to the class-II aminoacyl-tRNA synthetase family. In terms of assembly, homodimer.

It localises to the cytoplasm. It catalyses the reaction tRNA(His) + L-histidine + ATP = L-histidyl-tRNA(His) + AMP + diphosphate + H(+). This is Histidine--tRNA ligase from Caldicellulosiruptor saccharolyticus (strain ATCC 43494 / DSM 8903 / Tp8T 6331).